Consider the following 113-residue polypeptide: Class I hydrophobin POH1 (113 aa).

An N-terminal signal peptide occupies residues 1 to 26 (MFSIRISTVVLAASALLAVAIPMTNT). 4 disulfide bridges follow: cysteine 31–cysteine 93, cysteine 38–cysteine 87, cysteine 39–cysteine 74, and cysteine 94–cysteine 107.

Belongs to the fungal hydrophobin family. Self-assembles to form functional amyloid fibrils called rodlets. Self-assembly into fibrillar rodlets occurs spontaneously at hydrophobic:hydrophilic interfaces and the rodlets further associate laterally to form amphipathic monolayers. Expressed in the fruiting bodies but not in vegetative mycelium.

The protein resides in the secreted. The protein localises to the cell wall. Functionally, aerial growth, conidiation, and dispersal of filamentous fungi in the environment rely upon a capability of their secreting small amphipathic proteins called hydrophobins (HPBs) with low sequence identity. Class I can self-assemble into an outermost layer of rodlet bundles on aerial cell surfaces, conferring cellular hydrophobicity that supports fungal growth, development and dispersal; whereas Class II form highly ordered films at water-air interfaces through intermolecular interactions but contribute nothing to the rodlet structure. POH1 is a class I hydrophobin that is involved in the formation of mycelium knots and subsequent fruiting bodies. The protein is Class I hydrophobin POH1 of Pleurotus ostreatus (Oyster mushroom).